A 326-amino-acid polypeptide reads, in one-letter code: Homoserine kinase (326 aa).

The protein belongs to the pseudomonas-type ThrB family.

It carries out the reaction L-homoserine + ATP = O-phospho-L-homoserine + ADP + H(+). It functions in the pathway amino-acid biosynthesis; L-threonine biosynthesis; L-threonine from L-aspartate: step 4/5. This chain is Homoserine kinase, found in Sinorhizobium medicae (strain WSM419) (Ensifer medicae).